A 445-amino-acid chain; its full sequence is Glutamyl-tRNA(Gln) amidotransferase subunit D (445 aa).

One can recognise an Asparaginase/glutaminase domain in the interval Ser93–Asn425. Catalysis depends on residues Thr103, Thr179, Asp180, and Lys258.

This sequence belongs to the asparaginase 1 family. GatD subfamily. In terms of assembly, heterodimer of GatD and GatE.

It carries out the reaction L-glutamyl-tRNA(Gln) + L-glutamine + ATP + H2O = L-glutaminyl-tRNA(Gln) + L-glutamate + ADP + phosphate + H(+). In terms of biological role, allows the formation of correctly charged Gln-tRNA(Gln) through the transamidation of misacylated Glu-tRNA(Gln) in organisms which lack glutaminyl-tRNA synthetase. The reaction takes place in the presence of glutamine and ATP through an activated gamma-phospho-Glu-tRNA(Gln). The GatDE system is specific for glutamate and does not act on aspartate. The chain is Glutamyl-tRNA(Gln) amidotransferase subunit D from Saccharolobus islandicus (strain Y.N.15.51 / Yellowstone #2) (Sulfolobus islandicus).